A 178-amino-acid chain; its full sequence is TM2 domain-containing protein biscotti (178 aa).

The signal sequence occupies residues 1–18; sequence MFPVLLLLLFFFAKETHQ. Residues 19-99 are Extracellular-facing; it reads INVDCNELQM…YHLDTTLLLS (81 aa). N-linked (GlcNAc...) asparagine glycosylation is found at Asn-69 and Asn-75. Positions 94–137 constitute a TM2 domain; that stretch reads TTLLLSVFLGMFGVDRFYLGYPGIGLLKFCTLGGMFLGQLIDIV. The chain crosses the membrane as a helical span at residues 100-120; sequence VFLGMFGVDRFYLGYPGIGLL. Residues 121-124 are Cytoplasmic-facing; that stretch reads KFCT. A helical transmembrane segment spans residues 125-145; that stretch reads LGGMFLGQLIDIVLIALQVVG. Residues 146-178 lie on the Extracellular side of the membrane; sequence PADGSAYVIPYYGAGIHIVRSDNTTYRLPRDDW. An N-linked (GlcNAc...) asparagine glycan is attached at Asn-168.

It belongs to the TM2 family.

The protein localises to the membrane. Positive regulator of Notch signaling. Maternal neurogenic factor involved in Notch signaling-dependent neuroectodermal specification during early embryogenesis. Functions cooperatively with amx/TM2D3 and amrt/TM2D2. The polypeptide is TM2 domain-containing protein biscotti (Drosophila melanogaster (Fruit fly)).